An 859-amino-acid chain; its full sequence is DNA mismatch repair protein MutS (859 aa).

622-629 (GPNMGGKS) is a binding site for ATP.

The protein belongs to the DNA mismatch repair MutS family.

This protein is involved in the repair of mismatches in DNA. It is possible that it carries out the mismatch recognition step. This protein has a weak ATPase activity. In Coxiella burnetii (strain Dugway 5J108-111), this protein is DNA mismatch repair protein MutS.